We begin with the raw amino-acid sequence, 1206 residues long: Translocase of chloroplast 132, chloroplastic (1206 aa).

Glycine 2 carries the N-acetylglycine modification. Residues 13–33 (REDKKLAEDRISDEQVVKNEL) are a coiled coil. Disordered stretches follow at residues 33 to 75 (LVRS…SDDL) and 97 to 119 (VGDLDETSSNEGGVKDFTAVGES). A compositionally biased stretch (acidic residues) spans 39–49 (VRDDNEDEVFE). Serine 195 is subject to Phosphoserine. The tract at residues 233-499 (QTEQEVEEGE…TTTEADEHDE (267 aa)) is disordered. Over residues 309 to 324 (AYTSNIVTNASGDNEV) the composition is skewed to polar residues. The segment covering 325–336 (SSAVTSSPLEES) has biased composition (low complexity). Serine 337, serine 363, and serine 398 each carry phosphoserine. A compositionally biased stretch (polar residues) spans 357–379 (LASSPHSYPESTEVHSNSGSPGV). Positions 403–427 (KELEKQQSSRVHVDPEITENSHVET) are enriched in basic and acidic residues. Residues 430–440 (EVVSSVSPTES) show a composition bias toward low complexity. Positions 468-492 (APQQSRVNGNGSHNQFQQAEDSTTT) are enriched in polar residues. In terms of domain architecture, AIG1-type G spans 572–801 (DFSCTIMVLG…KLQDNIPGRP (230 aa)). The G1 stretch occupies residues 581-588 (GKSGVGKS). Residues 584–589 (GVGKSA) and 603–608 (DAFQMG) each bind GTP. A Mg(2+)-binding site is contributed by serine 588. Residues 603–606 (DAFQ) form a homodimerization region. The tract at residues 607-611 (MGTKR) is G2. Residues 628 to 631 (DTPG) are G3. Residues 666–671 (RLDMQS) are homodimerization. Residues 700 to 703 (THAA) form a G4 region. GTP-binding positions include histidine 701 and 749–750 (EN). Residues 749–751 (ENH) form a G5 region. A disordered region spans residues 824 to 862 (QPKLPEQQYGDEEDEDDLEESSDSDEESEYDQLPPFKSL). Residues 832–853 (YGDEEDEDDLEESSDSDEESEY) are compositionally biased toward acidic residues. A helical transmembrane segment spans residues 1182-1199 (LAMVAIVPLFKKLLSYYY).

It belongs to the TRAFAC class TrmE-Era-EngA-EngB-Septin-like GTPase superfamily. AIG1/Toc34/Toc159-like paraseptin GTPase family. TOC159 subfamily. Homodimer. Part of the TOC core complex that includes 1 protein for the specific recognition of transit peptides surrounded by a ring composed of four proteins forming translocation channels, and four to five GTP-binding proteins providing energy. This core complex can interact with components of the TIC complex to form a larger import complex. Chloroplastic protein precursor such as prSS (precursor of the RuBisCO small subunit) interacts with these complexes. The TOC complex contains a specific subset of polar lipids such as digalactosyldiacylglyceride (DGDG), phosphatidylcholine (PC) and phosphatidylglycerol (PG). Mg(2+) is required as a cofactor. Post-translationally, phosphorylated by KOC1. In terms of tissue distribution, expressed in seedlings, leaves, flowers, and roots.

Its subcellular location is the plastid. It localises to the chloroplast outer membrane. The protein resides in the cytoplasm. In terms of biological role, GTPase involved in protein precursor import into chloroplasts. Seems to recognize chloroplast-destined precursor proteins and regulate their presentation to the translocation channel through GTP hydrolysis. Probably specialized in the import of nuclear encoded non-photosynthetic preproteins from the cytoplasm to the chloroplast. In Arabidopsis thaliana (Mouse-ear cress), this protein is Translocase of chloroplast 132, chloroplastic.